Consider the following 268-residue polypeptide: Zinc transporter ZupT (268 aa).

5 consecutive transmembrane segments (helical) span residues 6 to 26, 37 to 57, 70 to 90, 125 to 145, and 152 to 172; these read LAFL…LIAF, SFAL…DIFF, TQGY…IGFI, GLFT…ATFV, and SIGL…GIAV. Fe(2+)-binding residues include Asn-136 and Glu-139. Positions 139 and 164 each coordinate Zn(2+). The Fe(2+) site is built by Asn-165, Glu-168, and Glu-197. Residue Glu-168 coordinates Zn(2+). 2 helical membrane passes run 201 to 221 and 248 to 268; these read AIVA…GIIF and MSMY…LLLA.

This sequence belongs to the ZIP transporter (TC 2.A.5) family. ZupT subfamily.

The protein resides in the cell membrane. It catalyses the reaction Zn(2+)(in) = Zn(2+)(out). Functionally, mediates zinc uptake. May also transport other divalent cations. The protein is Zinc transporter ZupT of Oceanobacillus iheyensis (strain DSM 14371 / CIP 107618 / JCM 11309 / KCTC 3954 / HTE831).